A 344-amino-acid chain; its full sequence is tRNA N6-adenosine threonylcarbamoyltransferase (344 aa).

Fe cation is bound by residues His110 and His114. Residues 132–136 (LVSGG), Asp166, Gly179, Asp183, and Asn278 each bind substrate. Residue Asp306 coordinates Fe cation.

Belongs to the KAE1 / TsaD family. The cofactor is Fe(2+).

The protein localises to the cytoplasm. It carries out the reaction L-threonylcarbamoyladenylate + adenosine(37) in tRNA = N(6)-L-threonylcarbamoyladenosine(37) in tRNA + AMP + H(+). In terms of biological role, required for the formation of a threonylcarbamoyl group on adenosine at position 37 (t(6)A37) in tRNAs that read codons beginning with adenine. Is involved in the transfer of the threonylcarbamoyl moiety of threonylcarbamoyl-AMP (TC-AMP) to the N6 group of A37, together with TsaE and TsaB. TsaD likely plays a direct catalytic role in this reaction. The polypeptide is tRNA N6-adenosine threonylcarbamoyltransferase (Nocardia farcinica (strain IFM 10152)).